Here is an 89-residue protein sequence, read N- to C-terminus: MPAPRYKSGSSKKVYRKAPGNSSIVHYRRKKQSKAVCGACGALLNGVPRGRAVEITKLAKTEKRPERAFGGNLCPKCVKKMMVAKARNF.

Residues 1 to 22 (MPAPRYKSGSSKKVYRKAPGNS) are disordered.

This sequence belongs to the eukaryotic ribosomal protein eL34 family.

This is Large ribosomal subunit protein eL34 from Methanococcus maripaludis (strain C5 / ATCC BAA-1333).